The sequence spans 176 residues: Ribosome rescue factor SmrB (176 aa).

The Smr domain occupies 93-168 (LDLHGYRQSE…GDAALLVLID (76 aa)).

Belongs to the SmrB family. In terms of assembly, associates with collided ribosomes, but not with correctly translating polysomes.

In terms of biological role, acts as a ribosome collision sensor. Detects stalled/collided disomes (pairs of ribosomes where the leading ribosome is stalled and a second ribosome has collided with it) and endonucleolytically cleaves mRNA at the 5' boundary of the stalled ribosome. Stalled/collided disomes form a new interface (primarily via the 30S subunits) that binds SmrB. Cleaved mRNA becomes available for tmRNA ligation, leading to ribosomal subunit dissociation and rescue of stalled ribosomes. The polypeptide is Ribosome rescue factor SmrB (Shewanella oneidensis (strain ATCC 700550 / JCM 31522 / CIP 106686 / LMG 19005 / NCIMB 14063 / MR-1)).